Reading from the N-terminus, the 145-residue chain is 3-hydroxyacyl-[acyl-carrier-protein] dehydratase FabZ (145 aa).

H47 is a catalytic residue.

It belongs to the thioester dehydratase family. FabZ subfamily.

Its subcellular location is the cytoplasm. It catalyses the reaction a (3R)-hydroxyacyl-[ACP] = a (2E)-enoyl-[ACP] + H2O. Involved in unsaturated fatty acids biosynthesis. Catalyzes the dehydration of short chain beta-hydroxyacyl-ACPs and long chain saturated and unsaturated beta-hydroxyacyl-ACPs. The sequence is that of 3-hydroxyacyl-[acyl-carrier-protein] dehydratase FabZ from Ruthia magnifica subsp. Calyptogena magnifica.